A 495-amino-acid chain; its full sequence is uncharacterized protein (495 aa).

The next 12 helical transmembrane spans lie at 43–63 (IIIS…MPSI), 75–95 (TLVV…PLIF), 106–126 (PLNI…ALSV), 128–148 (LAMF…GLGI), 168–188 (IYFL…GFIA), 196–216 (WEFW…VVFL), 284–304 (PIMI…YLLF), 323–343 (GLTY…LLPL), 366–386 (PMAF…GWTV), 390–410 (VFWF…VMTF), 426–446 (ASAM…FPLF), and 461–481 (SLLA…YMFG).

This sequence belongs to the major facilitator superfamily. CAR1 family.

It is found in the membrane. This is an uncharacterized protein from Schizosaccharomyces pombe (strain 972 / ATCC 24843) (Fission yeast).